We begin with the raw amino-acid sequence, 658 residues long: Deoxynucleoside triphosphate triphosphohydrolase SAMHD1 (658 aa).

The segment at 23–68 (SQPRVSEVAMQSAPLEQPAKRPRCDGSPRTPPSTPPATANLSADDD) is disordered. Position 49 is a phosphoserine (serine 49). Phosphothreonine is present on threonine 52. Serine 55 carries the phosphoserine modification. Threonine 56 is subject to Phosphothreonine. Phosphoserine is present on residues serine 64 and serine 125. The region spanning 77–142 (WEPEDVCSFL…IECIQQLSQS (66 aa)) is the SAM domain. 2 residues coordinate GTP: lysine 148 and valine 149. DGTP is bound at residue asparagine 151. Residues aspartate 169, glutamine 174, and arginine 177 each coordinate GTP. The dGTP site is built by leucine 182 and valine 188. The region spanning 196–348 (RFEHSLGVGY…GIDVDKWDYF (153 aa)) is the HD domain. 3 residues coordinate Mn(2+): histidine 199, histidine 238, and aspartate 239. Aspartate 239, histidine 247, histidine 265, and glutamate 266 together coordinate dGTP. Histidine 265 is an active-site residue. Residue aspartate 343 participates in Mn(2+) binding. The dGTP site is built by tyrosine 347, aspartate 351, arginine 365, arginine 395, lysine 397, asparagine 401, tyrosine 417, histidine 419, and lysine 420. Residues arginine 494 and lysine 498 each coordinate GTP. A Glycyl lysine isopeptide (Lys-Gly) (interchain with G-Cter in SUMO2) cross-link involves residue lysine 509. Lysine 565 is a binding site for GTP. Lysine 565 serves as a coordination point for dGTP. Threonine 634 carries the post-translational modification Phosphothreonine. Threonine 634 carries the post-translational modification (Microbial infection) Phosphothreonine.

It belongs to the SAMHD1 family. Homodimer; in absence of GTP and dNTP. Homotetramer; in GTP- and dNTP-bound form. Interacts with MRE11; leading to stimulate the exonuclease activity of MRE11. Interacts with RBBP8/CtIP. Interacts with RBBP8/CtIP. Interacts (via its C-terminus) with CD81. Zn(2+) is required as a cofactor. Post-translationally, phosphorylation at Thr-634 by CDK1 acts as a switch to control deoxynucleoside triphosphate (dNTPase)-dependent and -independent functions. Phosphorylation at Thr-634 takes place in cycling cells: it reduces the stability of the homotetramer, impairing the dNTPase activity and subsequent ability to restrict infection by viruses. It also inhibits ability to suppress LINE-1 retrotransposon activity. In contrast, phosphorylation at Thr-634 promotes DNA end resection at stalled replication forks in response to DNA damage. In terms of processing, (Microbial infection) Phosphorylation at Thr-634 by mouse cytomegalovirus kinase M97 leads to a reduced level of dNTP hydrolase activity and the loss of viral restriction. Not phosphorylated by CDK1 at the C-terminus.

The protein localises to the nucleus. It localises to the chromosome. The catalysed reaction is a 2'-deoxyribonucleoside 5'-triphosphate + H2O = a 2'-deoxyribonucleoside + triphosphate + H(+). It catalyses the reaction dATP + H2O = 2'-deoxyadenosine + triphosphate + H(+). The enzyme catalyses dCTP + H2O = 2'-deoxycytidine + triphosphate + H(+). It carries out the reaction dGTP + H2O = 2'-deoxyguanosine + triphosphate + H(+). The catalysed reaction is dTTP + H2O = thymidine + triphosphate + H(+). With respect to regulation, allosterically activated and regulated via the combined actions of GTP and dNTPs (dATP, dGTP, dTTP and dCTP): Allosteric site 1 binds GTP, while allosteric site 2 binds dNTP. Allosteric activation promotes the formation of highly active homotetramers. Isoform 1: Phosphorylation at Thr-634 impairs homotetramerization, thereby inhibiting dNTPase activity, leading to reduced ability to restrict infection by viruses. Its function is as follows. Protein that acts both as a host restriction factor involved in defense response to virus and as a regulator of DNA end resection at stalled replication forks. Has deoxynucleoside triphosphate (dNTPase) activity, which is required to restrict infection by viruses: dNTPase activity reduces cellular dNTP levels to levels too low for retroviral reverse transcription to occur, blocking early-stage virus replication in dendritic and other myeloid cells. Likewise, suppresses LINE-1 retrotransposon activity. In addition to virus restriction, dNTPase activity acts as a regulator of DNA precursor pools by regulating dNTP pools. Phosphorylation at Thr-634 acts as a switch to control dNTPase-dependent and -independent functions: it inhibits dNTPase activity and ability to restrict infection by viruses, while it promotes DNA end resection at stalled replication forks. Functions during S phase at stalled DNA replication forks to promote the resection of gapped or reversed forks: acts by stimulating the exonuclease activity of MRE11, activating the ATR-CHK1 pathway and allowing the forks to restart replication. Its ability to promote degradation of nascent DNA at stalled replication forks is required to prevent induction of type I interferons, thereby preventing chronic inflammation. Ability to promote DNA end resection at stalled replication forks is independent of dNTPase activity. Enhances immunoglobulin hypermutation in B-lymphocytes by promoting transversion mutation. The chain is Deoxynucleoside triphosphate triphosphohydrolase SAMHD1 from Mus musculus (Mouse).